Consider the following 105-residue polypeptide: TPR repeat-containing protein PA0015 (105 aa).

TPR repeat units lie at residues 17–50 (ALLR…DPKY) and 52–84 (AGWK…AATH).

This is TPR repeat-containing protein PA0015 from Pseudomonas aeruginosa (strain ATCC 15692 / DSM 22644 / CIP 104116 / JCM 14847 / LMG 12228 / 1C / PRS 101 / PAO1).